Consider the following 131-residue polypeptide: UPF0102 protein YraN (131 aa).

The segment covering 1–19 (MATVPTRSGSPRQLTTKQT) has biased composition (polar residues). The tract at residues 1–21 (MATVPTRSGSPRQLTTKQTGD) is disordered.

The protein belongs to the UPF0102 family.

In Shigella flexneri serotype 5b (strain 8401), this protein is UPF0102 protein YraN.